We begin with the raw amino-acid sequence, 61 residues long: Large ribosomal subunit protein bL32 (61 aa).

Over residues M1 to R16 the composition is skewed to basic residues. The disordered stretch occupies residues M1–S33.

The protein belongs to the bacterial ribosomal protein bL32 family.

The sequence is that of Large ribosomal subunit protein bL32 from Allorhizobium ampelinum (strain ATCC BAA-846 / DSM 112012 / S4) (Agrobacterium vitis (strain S4)).